Reading from the N-terminus, the 578-residue chain is Sulfite reductase [NADPH] hemoprotein beta-component (578 aa).

Residues cysteine 441, cysteine 447, cysteine 487, and cysteine 491 each contribute to the [4Fe-4S] cluster site. Siroheme is bound at residue cysteine 491.

The protein belongs to the nitrite and sulfite reductase 4Fe-4S domain family. In terms of assembly, alpha(8)-beta(8). The alpha component is a flavoprotein, the beta component is a hemoprotein. It depends on siroheme as a cofactor. Requires [4Fe-4S] cluster as cofactor.

It carries out the reaction hydrogen sulfide + 3 NADP(+) + 3 H2O = sulfite + 3 NADPH + 4 H(+). The protein operates within sulfur metabolism; hydrogen sulfide biosynthesis; hydrogen sulfide from sulfite (NADPH route): step 1/1. In terms of biological role, component of the sulfite reductase complex that catalyzes the 6-electron reduction of sulfite to sulfide. This is one of several activities required for the biosynthesis of L-cysteine from sulfate. This is Sulfite reductase [NADPH] hemoprotein beta-component from Vibrio vulnificus (strain YJ016).